A 42-amino-acid chain; its full sequence is Beta-defensin 6 (42 aa).

Q1 is subject to Pyrrolidone carboxylic acid. Cystine bridges form between C9/C38, C16/C31, and C21/C39.

The protein belongs to the beta-defensin family. As to expression, neutrophilic granules.

Its subcellular location is the secreted. In terms of biological role, has bactericidal activity. Active against E.coli ML35 and S.aureus 502A. This Bos taurus (Bovine) protein is Beta-defensin 6 (DEFB6).